Consider the following 183-residue polypeptide: Dual-action ribosomal maturation protein DarP (183 aa).

It belongs to the DarP family.

The protein localises to the cytoplasm. In terms of biological role, member of a network of 50S ribosomal subunit biogenesis factors which assembles along the 30S-50S interface, preventing incorrect 23S rRNA structures from forming. Promotes peptidyl transferase center (PTC) maturation. The polypeptide is Dual-action ribosomal maturation protein DarP (Salmonella arizonae (strain ATCC BAA-731 / CDC346-86 / RSK2980)).